The sequence spans 1559 residues: Arginine-glutamic acid dipeptide repeats protein (1559 aa).

Residues 1–36 show a composition bias toward basic and acidic residues; it reads MTADKDKDKDKEKDRDRDRDRERDKRDKARESENAR. The tract at residues 1–89 is disordered; it reads MTADKDKDKD…KKKSRYERTD (89 aa). A phosphoserine mark is found at S53 and S56. Over residues 73–84 the composition is skewed to basic residues; sequence KSRKKPPKKKSR. Residues 102–282 enclose the BAH domain; the sequence is VVYRPGDCVY…PETRRLNSTQ (181 aa). T119 is modified (phosphothreonine). S141 and S303 each carry phosphoserine. Residues 283–386 form the ELM2 domain; sequence GEIRVGPSHQ…KALQRLVKKP (104 aa). One can recognise an SANT domain in the interval 390–442; the sequence is LIEKCWTEDEVKRFVKGLRQYGKNFFRIRKELLPNKETGELITFYYYWKKTPE. The tract at residues 463–494 is disordered; that stretch reads TRTASTPVNTPSRPPSSEFLDLSSASEDDFDS. A compositionally biased stretch (polar residues) spans 464 to 473; sequence RTASTPVNTP. Over residues 478-487 the composition is skewed to low complexity; that stretch reads SSEFLDLSSA. A GATA-type zinc finger spans residues 507–532; it reads RHCFTTTSKDWHHGGRENILLCTDCR. The disordered stretch occupies residues 541–1125; that stretch reads LPPIEKPVDP…PSHASQSARF (585 aa). K559 is covalently cross-linked (Glycyl lysine isopeptide (Lys-Gly) (interchain with G-Cter in SUMO2)). S593, S599, and S612 each carry phosphoserine. Residues 608–622 show a composition bias toward low complexity; that stretch reads SGRNSPSAASTSSND. The span at 623-639 shows a compositional bias: basic and acidic residues; that stretch reads SKAEAVKKSAKKVKEEA. K636 is covalently cross-linked (Glycyl lysine isopeptide (Lys-Gly) (interchain with G-Cter in SUMO2)). Phosphoserine is present on residues S641, S655, S674, and S678. The segment covering 651–672 has biased composition (basic and acidic residues); the sequence is EKVASDTEDTDRATSKKTKTQE. A compositionally biased stretch (basic and acidic residues) spans 687 to 707; that stretch reads SDSRSVNDEGSSDPKDIDQDN. Residues 708 to 735 show a composition bias toward polar residues; it reads RSTSPSIPSPQDNESDSDSSAQQQMLQT. The segment covering 736–761 has biased composition (low complexity); that stretch reads QPPALQAPSGAASAPSTAPPGTTQLP. The segment covering 768-791 has biased composition (polar residues); sequence SATTVPPQGSPATSQPPNQTQSTV. Residues 805 to 822 show a composition bias toward pro residues; that stretch reads LHPPRLPSPHPPLQPMTA. A compositionally biased stretch (low complexity) spans 890 to 900; sequence QLPASQSALQP. Residues 901–931 are compositionally biased toward pro residues; sequence QQPPREQPLPPAPLAMPHIKPPPTTPIPQLP. Positions 961 to 971 are enriched in low complexity; sequence KPLSSLSTHHP. Over residues 1027-1053 the composition is skewed to pro residues; the sequence is PQHPFVPGGPPPITPPSCPPTSTPPAG. A compositionally biased stretch (low complexity) spans 1054–1068; that stretch reads PSSSSQPPCSAAVSS. A phosphoserine mark is found at S1098, S1105, and S1107. Residues 1098 to 1109 are compositionally biased toward pro residues; the sequence is SPPPPPRSPSPE. The residue at position 1111 (T1111) is a Phosphothreonine. The stretch at 1148–1205 forms a coiled coil; the sequence is GSKLAKKREEAIEKAKREAEQKAREEREREKEKEKEREREREREREAERAAQKASSSA. K1150 is modified (N6-acetyllysine). Positions 1154–1198 are enriched in basic and acidic residues; sequence KREEAIEKAKREAEQKAREEREREKEKEKEREREREREREAERAA. A disordered region spans residues 1154–1239; sequence KREEAIEKAK…TTIAAVPPYI (86 aa). A Phosphotyrosine modification is found at Y1252. At S1259 the chain carries Phosphoserine.

In terms of assembly, interacts with HDAC1 and ATN1. Interaction with ATN1 is improved when the poly-Gln region of ATN1 is extended. Widely expressed.

The protein localises to the nucleus. It localises to the PML body. Its function is as follows. Plays a role as a transcriptional repressor during development. May play a role in the control of cell survival. Interacts with FAT1. The sequence is that of Arginine-glutamic acid dipeptide repeats protein (Rere) from Rattus norvegicus (Rat).